The sequence spans 116 residues: Large ribosomal subunit protein bL17 (116 aa).

The protein belongs to the bacterial ribosomal protein bL17 family. In terms of assembly, part of the 50S ribosomal subunit. Contacts protein L32.

The chain is Large ribosomal subunit protein bL17 from Acaryochloris marina (strain MBIC 11017).